A 21-amino-acid chain; its full sequence is Granule-bound starch synthase 1 (21 aa).

The protein belongs to the glycosyltransferase 1 family. Bacterial/plant glycogen synthase subfamily.

The protein localises to the plastid. The protein resides in the chloroplast. It localises to the amyloplast. It carries out the reaction an NDP-alpha-D-glucose + [(1-&gt;4)-alpha-D-glucosyl](n) = [(1-&gt;4)-alpha-D-glucosyl](n+1) + a ribonucleoside 5'-diphosphate + H(+). Its pathway is glycan biosynthesis; starch biosynthesis. The chain is Granule-bound starch synthase 1 from Secale cereale (Rye).